The chain runs to 215 residues: MKTVLLTGFDPFGGESINPAWEVAKSLHEKTIGEYKIISKQVPTVFHKSISVLKEYIEELAPEFIICIGQAGGRPDITIERVAINIDDARIADNEGNQPVDVPVVEEGPAAYWSTLPMKAIVKRLQAEGIPASVSQTAGTFVCNHLFYGLMHELEKQNHKVKGGFVHIPFLPEQASNYPGQPSMSLSTIRKGIELAVEVTTTVEVDIVEVGGTTH.

Catalysis depends on residues E80, C143, and H167.

Belongs to the peptidase C15 family. As to quaternary structure, homotetramer.

It localises to the cytoplasm. It carries out the reaction Release of an N-terminal pyroglutamyl group from a polypeptide, the second amino acid generally not being Pro.. Its function is as follows. Removes 5-oxoproline from various penultimate amino acid residues except L-proline. The polypeptide is Pyrrolidone-carboxylate peptidase (Bacillus cereus (strain Q1)).